The primary structure comprises 97 residues: MSSEGELGIEVVYALPGQQTVLRVELPAGSTAGDALNASGVLERHPEIDLTRQSVGVFGQIVGLDTPLHNGDRVEVYRPLQVDPKEARKRRAARKAS.

This sequence belongs to the UPF0125 (RnfH) family.

The protein is Protein RnfH of Halorhodospira halophila (strain DSM 244 / SL1) (Ectothiorhodospira halophila (strain DSM 244 / SL1)).